A 163-amino-acid polypeptide reads, in one-letter code: Protein VASCULATURE COMPLEXITY AND CONNECTIVITY (163 aa).

The N-terminal stretch at 1–27 is a signal peptide; it reads MTKIGGILVCLVIVGLDVAAAILGIQA. The next 3 membrane-spanning stretches (helical) occupy residues 54-74, 95-115, and 133-153; these read LGLG…LVGG, MACL…IVIG, and FLSI…AYYV.

The protein belongs to the DESIGUAL family. In terms of assembly, interacts with OPS. Expressed in vascular cells, mostly in hypocotyls, and, to a lower extent, in seedlings, roots, flowers, siliques, developing leaves and inflorescences, but barely in mature leaves and seeds. High levels in leaf primordia.

The protein resides in the endoplasmic reticulum membrane. Its function is as follows. Required, together with OPS, for embryo provasculature development and cotyledon vascular complexity and connectivity. Necessary, partially redundantly with DEAL2 and DEAL3, to ensure bilateral symmetry development and early leaf margin patterning, probably via the regulation of auxin and CUC2 distribution. Regulates cell proliferation but not cell expansion. This chain is Protein VASCULATURE COMPLEXITY AND CONNECTIVITY, found in Arabidopsis thaliana (Mouse-ear cress).